The sequence spans 234 residues: BTB/POZ domain-containing protein KCTD5 (234 aa).

Alanine 2 is subject to N-acetylalanine. The region spanning 44-146 is the BTB domain; sequence KWVRLNVGGT…LVKDKIRERD (103 aa). The segment at 211–234 is disordered; that stretch reads NSPHGPASEPSEKAKILQERGSRM. The span at 220–234 shows a compositional bias: basic and acidic residues; sequence PSEKAKILQERGSRM.

Homopentamer. Interacts (via C-terminus) with GRASP55/GORASP2. Interacts with CUL3 and with ubiquitinated proteins. Interacts with CRY1.

The protein resides in the cytoplasm. The protein localises to the cytosol. It is found in the nucleus. Its interaction with CUL3 suggests that it may act as a substrate adapter in some E3 ligase complex. Does not affect the function of Kv channel Kv2.1/KCNB1, Kv1.2/KCNA2, Kv4.2/KCND2 and Kv3.4/KCNC4. The sequence is that of BTB/POZ domain-containing protein KCTD5 (KCTD5) from Bos taurus (Bovine).